We begin with the raw amino-acid sequence, 274 residues long: Cytochrome b-c1 complex subunit Rieske, mitochondrial (274 aa).

Residues 79-103 lie on the Mitochondrial matrix side of the membrane; that stretch reads SHTDIKVPDFSEYRRLEVLDSTKSS. The chain crosses the membrane as a helical span at residues 104-140; that stretch reads RESSEARKGFSYLVTGVTTVGVAYAAKNAVTQFVSSM. Over 141–274 the chain is Mitochondrial intermembrane; it reads SASADVLALA…FTSDDMVIVG (134 aa). The region spanning 187 to 272 is the Rieske domain; sequence EAAVELSQLR…YEFTSDDMVI (86 aa). [2Fe-2S] cluster-binding residues include C217, H219, C236, H239, and S241. The cysteines at positions 222 and 238 are disulfide-linked.

This sequence belongs to the Rieske iron-sulfur protein family. Component of the ubiquinol-cytochrome c oxidoreductase (cytochrome b-c1 complex, complex III, CIII), a multisubunit enzyme composed of 11 subunits. The complex is composed of 3 respiratory subunits cytochrome b, cytochrome c1 and Rieske protein UQCRFS1, 2 core protein subunits UQCRC1/QCR1 and UQCRC2/QCR2, and 6 low-molecular weight protein subunits UQCRH/QCR6, UQCRB/QCR7, UQCRQ/QCR8, UQCR10/QCR9, UQCR11/QCR10 and subunit 9, the cleavage product of Rieske protein UQCRFS1. The complex exists as an obligatory dimer and forms supercomplexes (SCs) in the inner mitochondrial membrane with NADH-ubiquinone oxidoreductase (complex I, CI) and cytochrome c oxidase (complex IV, CIV), resulting in different assemblies (supercomplex SCI(1)III(2)IV(1) and megacomplex MCI(2)III(2)IV(2)). Incorporation of the Rieske protein UQCRFS1 is the penultimate step in complex III assembly. Interacts with TTC19, which is involved in the clearance of UQCRFS1 fragments. As to quaternary structure, component of the ubiquinol-cytochrome c oxidoreductase (cytochrome b-c1 complex, complex III, CIII). Subunit 9 corresponds to the mitochondrial targeting sequence (MTS) of Rieske protein UQCRFS1. It is retained after processing and incorporated inside complex III, where it remains bound to the complex and localizes between the 2 core subunits UQCRC1/QCR1 and UQCRC2/QCR2. Requires [2Fe-2S] cluster as cofactor. Post-translationally, proteolytic processing is necessary for the correct insertion of UQCRFS1 in the complex III dimer. Several fragments are generated during UQCRFS1 insertion, most probably due to the endogenous matrix-processing peptidase (MPP) activity of the 2 core protein subunits UQCRC1/QCR1 and UQCRC2/QCR2, which are homologous to the 2 mitochondrial-processing peptidase (MPP) subunits beta-MPP and alpha-MPP respectively. The action of the protease is also necessary for the clearance of the UQCRFS1 fragments.

Its subcellular location is the mitochondrion inner membrane. The catalysed reaction is a quinol + 2 Fe(III)-[cytochrome c](out) = a quinone + 2 Fe(II)-[cytochrome c](out) + 2 H(+)(out). In terms of biological role, component of the ubiquinol-cytochrome c oxidoreductase, a multisubunit transmembrane complex that is part of the mitochondrial electron transport chain which drives oxidative phosphorylation. The respiratory chain contains 3 multisubunit complexes succinate dehydrogenase (complex II, CII), ubiquinol-cytochrome c oxidoreductase (cytochrome b-c1 complex, complex III, CIII) and cytochrome c oxidase (complex IV, CIV), that cooperate to transfer electrons derived from NADH and succinate to molecular oxygen, creating an electrochemical gradient over the inner membrane that drives transmembrane transport and the ATP synthase. The cytochrome b-c1 complex catalyzes electron transfer from ubiquinol to cytochrome c, linking this redox reaction to translocation of protons across the mitochondrial inner membrane, with protons being carried across the membrane as hydrogens on the quinol. In the process called Q cycle, 2 protons are consumed from the matrix, 4 protons are released into the intermembrane space and 2 electrons are passed to cytochrome c. The Rieske protein is a catalytic core subunit containing a [2Fe-2S] iron-sulfur cluster. It cycles between 2 conformational states during catalysis to transfer electrons from the quinol bound in the Q(0) site in cytochrome b to cytochrome c1. Incorporation of UQCRFS1 is the penultimate step in complex III assembly. Component of the ubiquinol-cytochrome c oxidoreductase (cytochrome b-c1 complex, complex III, CIII). UQCRFS1 undergoes proteolytic processing once it is incorporated in the complex III dimer. One of the fragments, called subunit 9, corresponds to its mitochondrial targeting sequence (MTS). The proteolytic processing is necessary for the correct insertion of UQCRFS1 in the complex III dimer, but the persistence of UQCRFS1-derived fragments may prevent newly imported UQCRFS1 to be processed and assembled into complex III and is detrimental for the complex III structure and function. This chain is Cytochrome b-c1 complex subunit Rieske, mitochondrial (UQCRFS1), found in Gorilla gorilla gorilla (Western lowland gorilla).